The chain runs to 480 residues: ATP synthase subunit beta (480 aa).

Residue 153–160 participates in ATP binding; that stretch reads GGAGVGKT.

Belongs to the ATPase alpha/beta chains family. As to quaternary structure, F-type ATPases have 2 components, CF(1) - the catalytic core - and CF(0) - the membrane proton channel. CF(1) has five subunits: alpha(3), beta(3), gamma(1), delta(1), epsilon(1). CF(0) has three main subunits: a(1), b(2) and c(9-12). The alpha and beta chains form an alternating ring which encloses part of the gamma chain. CF(1) is attached to CF(0) by a central stalk formed by the gamma and epsilon chains, while a peripheral stalk is formed by the delta and b chains.

The protein resides in the cell membrane. It carries out the reaction ATP + H2O + 4 H(+)(in) = ADP + phosphate + 5 H(+)(out). Produces ATP from ADP in the presence of a proton gradient across the membrane. The catalytic sites are hosted primarily by the beta subunits. This chain is ATP synthase subunit beta, found in Lactobacillus gasseri (strain ATCC 33323 / DSM 20243 / BCRC 14619 / CIP 102991 / JCM 1131 / KCTC 3163 / NCIMB 11718 / NCTC 13722 / AM63).